We begin with the raw amino-acid sequence, 405 residues long: Arginine biosynthesis bifunctional protein ArgJ (405 aa).

The substrate site is built by threonine 152, lysine 178, threonine 189, glutamate 276, asparagine 400, and threonine 405. The active-site Nucleophile is the threonine 189.

The protein belongs to the ArgJ family. As to quaternary structure, heterotetramer of two alpha and two beta chains.

It is found in the cytoplasm. It carries out the reaction N(2)-acetyl-L-ornithine + L-glutamate = N-acetyl-L-glutamate + L-ornithine. The enzyme catalyses L-glutamate + acetyl-CoA = N-acetyl-L-glutamate + CoA + H(+). Its pathway is amino-acid biosynthesis; L-arginine biosynthesis; L-ornithine and N-acetyl-L-glutamate from L-glutamate and N(2)-acetyl-L-ornithine (cyclic): step 1/1. The protein operates within amino-acid biosynthesis; L-arginine biosynthesis; N(2)-acetyl-L-ornithine from L-glutamate: step 1/4. Catalyzes two activities which are involved in the cyclic version of arginine biosynthesis: the synthesis of N-acetylglutamate from glutamate and acetyl-CoA as the acetyl donor, and of ornithine by transacetylation between N(2)-acetylornithine and glutamate. This Pseudomonas putida (strain ATCC 47054 / DSM 6125 / CFBP 8728 / NCIMB 11950 / KT2440) protein is Arginine biosynthesis bifunctional protein ArgJ.